Here is a 526-residue protein sequence, read N- to C-terminus: NAD(P)H-quinone oxidoreductase subunit 2 (526 aa).

A run of 14 helical transmembrane segments spans residues Ile-16–Leu-36, Trp-43–Trp-63, Leu-80–Val-100, Leu-110–Ala-130, Leu-133–Tyr-153, Leu-168–Leu-188, Leu-212–Val-232, Pro-246–Ile-266, Trp-280–Leu-300, Leu-308–Thr-328, Ile-336–Phe-356, Leu-380–Gly-400, Ile-402–Ile-422, and Val-468–Phe-488.

Belongs to the complex I subunit 2 family. As to quaternary structure, NDH-1 can be composed of about 15 different subunits; different subcomplexes with different compositions have been identified which probably have different functions.

Its subcellular location is the cellular thylakoid membrane. The catalysed reaction is a plastoquinone + NADH + (n+1) H(+)(in) = a plastoquinol + NAD(+) + n H(+)(out). It catalyses the reaction a plastoquinone + NADPH + (n+1) H(+)(in) = a plastoquinol + NADP(+) + n H(+)(out). Functionally, NDH-1 shuttles electrons from an unknown electron donor, via FMN and iron-sulfur (Fe-S) centers, to quinones in the respiratory and/or the photosynthetic chain. The immediate electron acceptor for the enzyme in this species is believed to be plastoquinone. Couples the redox reaction to proton translocation, and thus conserves the redox energy in a proton gradient. Cyanobacterial NDH-1 also plays a role in inorganic carbon-concentration. In Trichodesmium erythraeum (strain IMS101), this protein is NAD(P)H-quinone oxidoreductase subunit 2.